Reading from the N-terminus, the 536-residue chain is Heparanase-like protein 3 (536 aa).

An N-terminal signal peptide occupies residues 1 to 24; sequence MAYRQILAIVLFLCVFQFLDCTVS. N-linked (GlcNAc...) asparagine glycosylation is found at Asn30, Asn122, Asn176, and Asn191. Catalysis depends on Glu202, which acts as the Proton donor. N-linked (GlcNAc...) asparagine glycans are attached at residues Asn265 and Asn308. Residue Glu319 is the Nucleophile of the active site. N-linked (GlcNAc...) asparagine glycosylation is found at Asn370, Asn427, Asn438, and Asn510.

Belongs to the glycosyl hydrolase 79 family.

It localises to the lysosome membrane. It is found in the secreted. In terms of biological role, endoglycosidase which is a cell surface and extracellular matrix-degrading enzyme. Cleaves heparan sulfate proteoglycans (HSPGs) into heparan sulfate side chains and core proteoglycans. This is Heparanase-like protein 3 from Arabidopsis thaliana (Mouse-ear cress).